The sequence spans 175 residues: R-phycoerythrin subunit beta (175 aa).

Cysteine 82 contributes to the (2R,3E)-phycoerythrobilin binding site.

Belongs to the phycobiliprotein family. As to quaternary structure, homodimer. Contains one covalently linked phycoerythrobilin chromophore.

Green-light absorbing phycoerythrin of unknown function. The protein is R-phycoerythrin subunit beta (cpeB) of Prochlorococcus marinus subsp. pastoris (strain CCMP1986 / NIES-2087 / MED4).